The following is a 312-amino-acid chain: DNA-directed RNA polymerase subunit alpha (312 aa).

Residues 1 to 226 (MIEFEKPKIT…DHLNLFVDLS (226 aa)) are alpha N-terminal domain (alpha-NTD). The tract at residues 243–312 (TERVLDKIIE…ELGLSLKKRK (70 aa)) is alpha C-terminal domain (alpha-CTD).

It belongs to the RNA polymerase alpha chain family. In terms of assembly, homodimer. The RNAP catalytic core consists of 2 alpha, 1 beta, 1 beta' and 1 omega subunit. When a sigma factor is associated with the core the holoenzyme is formed, which can initiate transcription.

The catalysed reaction is RNA(n) + a ribonucleoside 5'-triphosphate = RNA(n+1) + diphosphate. Its function is as follows. DNA-dependent RNA polymerase catalyzes the transcription of DNA into RNA using the four ribonucleoside triphosphates as substrates. The protein is DNA-directed RNA polymerase subunit alpha of Lactococcus lactis subsp. cremoris (strain MG1363).